Consider the following 501-residue polypeptide: Serine/threonine-protein kinase pelle (501 aa).

A disordered region spans residues 1–25; it reads MSGVQTAEAEAQAQNQANGNRTRSR. Over residues 7–18 the composition is skewed to low complexity; the sequence is AEAEAQAQNQAN. One can recognise a Death domain in the interval 55–121; that stretch reads WQQLATAVKL…NAMRLIKDYV (67 aa). Residues 144-176 form a disordered region; that stretch reads DSSAKVNNGPPFPSSSGVSNSNNNRTSTTATEE. Residues 149–167 are compositionally biased toward low complexity; it reads VNNGPPFPSSSGVSNSNNN. Residues 213–499 enclose the Protein kinase domain; that stretch reads WSPDNRLGQG…AVLKRFEPFV (287 aa). ATP contacts are provided by residues 219–227 and Lys240; that span reads LGQGGFGDV. Asp346 serves as the catalytic Proton acceptor. ATP-binding positions include 348–351 and Asp364; that span reads KPAN.

The protein belongs to the protein kinase superfamily. TKL Ser/Thr protein kinase family. Pelle subfamily. Interacts (via Death domain) with tub (via Death domain). Interacts with Pellino (Pli).

The protein resides in the cell membrane. It localises to the cytoplasm. The enzyme catalyses L-seryl-[protein] + ATP = O-phospho-L-seryl-[protein] + ADP + H(+). The catalysed reaction is L-threonyl-[protein] + ATP = O-phospho-L-threonyl-[protein] + ADP + H(+). Plays an essential role in the Tl receptor signaling pathway that establishes embryonic dorsoventral polarity; the signal directs import of dl into ventral and ventrolateral nuclei, thereby establishing dorsoventral polarity. Tub recruits pll to the plasma membrane and protein-protein interaction activates pll. In Drosophila melanogaster (Fruit fly), this protein is Serine/threonine-protein kinase pelle (pll).